Consider the following 353-residue polypeptide: Guanine nucleotide-binding protein subunit alpha (353 aa).

The segment at 1-26 (MGCGMSTEEKEGKARNEEIENQLKRD) is disordered. The N-myristoyl glycine moiety is linked to residue Gly2. Cys3 carries the S-palmitoyl cysteine lipid modification. The segment covering 7 to 26 (TEEKEGKARNEEIENQLKRD) has biased composition (basic and acidic residues). Positions 32-353 (NEIKMLLLGA…QENLRLCGLI (322 aa)) constitute a G-alpha domain. Residues 35–48 (KMLLLGAGESGKST) form a G1 motif region. Residues Glu43, Ser44, Gly45, Lys46, Ser47, Thr48, Asp150, Leu175, Thr181, Gly203, Asn269, Lys270, Asp272, and Ala325 each coordinate GTP. Ser47 is a binding site for Mg(2+). Residues 173–181 (DVLRSRVKT) form a G2 motif region. Residue Thr181 participates in Mg(2+) binding. The segment at 196 to 205 (YRMFDVGGQR) is G3 motif. The tract at residues 265-272 (ILFLNKID) is G4 motif. Residues 323-328 (TCATDT) form a G5 motif region.

The protein belongs to the G-alpha family. G(q) subfamily. G proteins are composed of 3 units; alpha, beta and gamma. The alpha chain contains the guanine nucleotide binding site. Requires Mg(2+) as cofactor.

In terms of biological role, guanine nucleotide-binding proteins (G proteins) are involved as modulators or transducers in various transmembrane signaling systems. This is Guanine nucleotide-binding protein subunit alpha from Cryphonectria parasitica (Chestnut blight fungus).